We begin with the raw amino-acid sequence, 148 residues long: Prefoldin subunit 2 (148 aa).

A coiled-coil region spans residues 87 to 114 (KDGLEEVVRKLYETLEKKKKDLTEFEAK). Over residues 122–134 (QEDNKEGGNKKEG) the composition is skewed to basic and acidic residues. The disordered stretch occupies residues 122–148 (QEDNKEGGNKKEGNAQGVLVGAASSSQ).

It belongs to the prefoldin subunit beta family. Heterohexamer of two PFD-alpha type and four PFD-beta type subunits forming prefoldin co-chaperone complex. Interacts with LSM8, a specific subunit of the LSM2-8 complex, which is a core component of the spliceosome.

It is found in the cytoplasm. Its subcellular location is the nucleus. In terms of biological role, binds specifically to cytosolic chaperonin (c-CPN) and transfers target proteins to it. Binds to nascent polypeptide chain and promotes folding in an environment in which there are many competing pathways for nonnative proteins. Together with other chaperonins, contribute to the regulation of gene expression by modulating the spliceosome function on pre-mRNA splicing post-transcriptionally by acting as a co-chaperone of Hsp90 to control levels of LSM8. Required for microtubules (MTs) organization and dynamicity. Involved in the process leading to microtubules dissociation in response to gibberellic acid (GA) probably due to the DELLA proteins-mediated translocation of the prefoldin co-chaperone complex from the cytoplasm to the nucleus. In Arabidopsis thaliana (Mouse-ear cress), this protein is Prefoldin subunit 2.